A 398-amino-acid chain; its full sequence is 2,3-bisphosphoglycerate-independent phosphoglycerate mutase (398 aa).

Belongs to the BPG-independent phosphoglycerate mutase family. A-PGAM subfamily.

It catalyses the reaction (2R)-2-phosphoglycerate = (2R)-3-phosphoglycerate. It functions in the pathway carbohydrate degradation; glycolysis; pyruvate from D-glyceraldehyde 3-phosphate: step 3/5. In terms of biological role, catalyzes the interconversion of 2-phosphoglycerate and 3-phosphoglycerate. The polypeptide is 2,3-bisphosphoglycerate-independent phosphoglycerate mutase (Methanosarcina barkeri (strain Fusaro / DSM 804)).